The chain runs to 438 residues: Aspartate aminotransferase, cytoplasmic (438 aa).

3 residues coordinate L-aspartate: G73, W167, and N220. K284 is modified (N6-(pyridoxal phosphate)lysine). R412 serves as a coordination point for L-aspartate.

It belongs to the class-I pyridoxal-phosphate-dependent aminotransferase family. Homodimer. The cofactor is pyridoxal 5'-phosphate.

It localises to the cytoplasm. The enzyme catalyses L-aspartate + 2-oxoglutarate = oxaloacetate + L-glutamate. Plays a key role in amino acid metabolism. The protein is Aspartate aminotransferase, cytoplasmic (aatB) of Dictyostelium discoideum (Social amoeba).